A 234-amino-acid polypeptide reads, in one-letter code: tRNA (guanine-N(1)-)-methyltransferase (234 aa).

S-adenosyl-L-methionine contacts are provided by residues glycine 115 and 135–140 (VGDYIL).

Belongs to the RNA methyltransferase TrmD family. Homodimer.

It is found in the cytoplasm. It carries out the reaction guanosine(37) in tRNA + S-adenosyl-L-methionine = N(1)-methylguanosine(37) in tRNA + S-adenosyl-L-homocysteine + H(+). Its function is as follows. Specifically methylates guanosine-37 in various tRNAs. In Rickettsia rickettsii (strain Iowa), this protein is tRNA (guanine-N(1)-)-methyltransferase.